Here is a 153-residue protein sequence, read N- to C-terminus: Ubiquitin-conjugating enzyme E2 ubc-18 (153 aa).

Residues 2–149 (SATRRLQKEL…AEEHTRKHAE (148 aa)) form the UBC core domain. Residue Cys-86 is the Glycyl thioester intermediate of the active site.

The protein belongs to the ubiquitin-conjugating enzyme family. Interacts with E3 ubiquitin-protein ligase wwp-1. Interacts with RBR-type E3 ubiquitin transferase ari-1.1. In terms of tissue distribution, expressed in neurons localized in the head and tail of adults.

The catalysed reaction is S-ubiquitinyl-[E1 ubiquitin-activating enzyme]-L-cysteine + [E2 ubiquitin-conjugating enzyme]-L-cysteine = [E1 ubiquitin-activating enzyme]-L-cysteine + S-ubiquitinyl-[E2 ubiquitin-conjugating enzyme]-L-cysteine.. Its function is as follows. Ubiquitin-conjugating enzyme E2. Accepts ubiquitin from the E1 complex and catalyzes its covalent attachment to other proteins. Required for diet restriction-mediated lifespan extension, probably acting as part of a complex with ubiquitin-protein ligase wwp-1. Acts redundantly with lin-35/Rb in the regulation of pharyngeal morphogenesis during embryonic development by negatively regulating the expression of proteins such as sup-35. The sequence is that of Ubiquitin-conjugating enzyme E2 ubc-18 from Caenorhabditis elegans.